The chain runs to 274 residues: ATP synthase subunit a (274 aa).

5 consecutive transmembrane segments (helical) span residues 40 to 60 (FWVC…VILI), 110 to 130 (IFVW…LVPF), 149 to 169 (DVNI…FYSI), 224 to 244 (IFIL…SVPW), and 245 to 265 (AIFH…LTIV).

The protein belongs to the ATPase A chain family. As to quaternary structure, F-type ATPases have 2 components, CF(1) - the catalytic core - and CF(0) - the membrane proton channel. CF(1) has five subunits: alpha(3), beta(3), gamma(1), delta(1), epsilon(1). CF(0) has three main subunits: a(1), b(2) and c(9-12). The alpha and beta chains form an alternating ring which encloses part of the gamma chain. CF(1) is attached to CF(0) by a central stalk formed by the gamma and epsilon chains, while a peripheral stalk is formed by the delta and b chains.

The protein localises to the cell membrane. Functionally, key component of the proton channel; it plays a direct role in the translocation of protons across the membrane. This chain is ATP synthase subunit a, found in Buchnera aphidicola subsp. Baizongia pistaciae (strain Bp).